The sequence spans 348 residues: MSKTAVKDSATEKTKLSESEQHYFNSYDHYGIHEEMLQDTVRTLSYRNAIIQNKDLFKDKIVLDVGCGTGILSMFAAKHGAKHVIGVDMSSIIEMAKELVELNGFSDKITLLRGKLEDVHLPFPKVDIIISEWMGYFLLYESMMDTVLYARDHYLVEGGLIFPDKCSIHLAGLEDSQYKDEKLNYWQDVYGFDYSPFVPLVLHEPIVDTVERNNVNTTSDKLIEFDLNTVKISDLAFKSNFKLTAKRQDMINGIVTWFDIVFPAPKGKRPVEFSTGPHAPYTHWKQTIFYFPDDLDAETGDTIEGELVCSPNEKNNRDLNIKISYKFESNGIDGNSRSRKNEGSYLMH.

The SAM-dependent MTase PRMT-type domain maps to 20–322 (EQHYFNSYDH…EKNNRDLNIK (303 aa)). S-adenosyl-L-methionine is bound by residues His33, Arg42, Gly66, Asp88, and Glu117. Active-site residues include Glu132 and Glu141.

This sequence belongs to the class I-like SAM-binding methyltransferase superfamily. Protein arginine N-methyltransferase family. Homodimer. The dimers can then associate to form a ring-shaped homohexamer. Interacts with NPL3, BRE5, MTR4, SNF2, SUM1, and SSD1.

It localises to the nucleus. It catalyses the reaction L-arginyl-[protein] + S-adenosyl-L-methionine = N(omega)-methyl-L-arginyl-[protein] + S-adenosyl-L-homocysteine + H(+). The enzyme catalyses L-arginyl-[protein] + 2 S-adenosyl-L-methionine = N(omega),N(omega)-dimethyl-L-arginyl-[protein] + 2 S-adenosyl-L-homocysteine + 2 H(+). Its function is as follows. S-adenosyl-L-methionine-dependent protein-arginine N-methyltransferase that catalyzes both the mono- and asymmetric (type I) dimethylation of the guanidino nitrogens of arginine residues in a variety of RNA-binding proteins such as heterogeneous nuclear ribonucleoproteins (hnRNPs) and small nuclear ribonucleoproteins (snRNPs). Methylates NAB2, NPL3, HRP1 and YRA1, shuttling hnRNPs involved in mRNA processing and export, facilitating their export out of the nucleus. Methylation of NPL3 weakens its interaction with THO2, a component of the TREX (transcription/export) complex important for transcriptional elongation and recruitment of mRNA export factors. Methylates the hnRNP HRB1, but does not influence its subcellular location. Methylates the nucleolar proteins GAR1, NOP1 and NSR1. Methylates the snRNP SNP1 and modulates the cotranscriptional recruitment of splicing factors. Dimethylates free histone H4 (HHF1/HHF2) at 'Arg-4' (H4R3me2a) and plays a role in preservation and establishment of silent chromatin domains. Mono- and dimethylates ribosomal protein S2 (RPS2) at 'Arg-11'. Methylates the catalytic subunit of the SWI/SNF chromatin-remodeling complex SNF2. This chain is Protein arginine N-methyltransferase 1, found in Saccharomyces cerevisiae (strain ATCC 204508 / S288c) (Baker's yeast).